The sequence spans 372 residues: Queuine tRNA-ribosyltransferase (372 aa).

Aspartate 93 (proton acceptor) is an active-site residue. Residues 93–97, aspartate 147, glutamine 190, and glycine 217 each bind substrate; that span reads DSGGF. The RNA binding stretch occupies residues 248 to 254; sequence GVGSPDC. Aspartate 267 acts as the Nucleophile in catalysis. The RNA binding; important for wobble base 34 recognition stretch occupies residues 272–276; the sequence is TRMAR. 4 residues coordinate Zn(2+): cysteine 305, cysteine 307, cysteine 310, and histidine 336.

Belongs to the queuine tRNA-ribosyltransferase family. Homodimer. Within each dimer, one monomer is responsible for RNA recognition and catalysis, while the other monomer binds to the replacement base PreQ1. It depends on Zn(2+) as a cofactor.

It carries out the reaction 7-aminomethyl-7-carbaguanine + guanosine(34) in tRNA = 7-aminomethyl-7-carbaguanosine(34) in tRNA + guanine. The protein operates within tRNA modification; tRNA-queuosine biosynthesis. Functionally, catalyzes the base-exchange of a guanine (G) residue with the queuine precursor 7-aminomethyl-7-deazaguanine (PreQ1) at position 34 (anticodon wobble position) in tRNAs with GU(N) anticodons (tRNA-Asp, -Asn, -His and -Tyr). Catalysis occurs through a double-displacement mechanism. The nucleophile active site attacks the C1' of nucleotide 34 to detach the guanine base from the RNA, forming a covalent enzyme-RNA intermediate. The proton acceptor active site deprotonates the incoming PreQ1, allowing a nucleophilic attack on the C1' of the ribose to form the product. After dissociation, two additional enzymatic reactions on the tRNA convert PreQ1 to queuine (Q), resulting in the hypermodified nucleoside queuosine (7-(((4,5-cis-dihydroxy-2-cyclopenten-1-yl)amino)methyl)-7-deazaguanosine). The sequence is that of Queuine tRNA-ribosyltransferase from Desulforudis audaxviator (strain MP104C).